Here is a 297-residue protein sequence, read N- to C-terminus: HTH-type transcriptional regulator ArgP (297 aa).

Positions 2-58 (FDYKLLSALAAVVEQAGFERAAQVLGLSQSAISQRIKLLEARVGQPVLVRGTPPSPT) constitute an HTH lysR-type domain. Residues 19-38 (FERAAQVLGLSQSAISQRIK) constitute a DNA-binding region (H-T-H motif).

Belongs to the LysR transcriptional regulatory family. Homodimer.

Controls the transcription of genes involved in arginine and lysine metabolism. The chain is HTH-type transcriptional regulator ArgP from Pseudomonas fluorescens (strain Pf0-1).